The primary structure comprises 532 residues: Cilia- and flagella-associated protein 97 (532 aa).

Residue Ser19 is modified to Phosphoserine. Disordered stretches follow at residues 28–83 (ETNS…PVEN), 116–263 (IPNR…TPDI), 306–333 (KAAKKGKEKHEPDVSSKSSSVLDSSLDH), 398–421 (LSRQAEKPGSKSTIPRSADHPPKL), and 485–532 (GQYS…TAWL). The segment covering 35–49 (KQNDDPKERIDKDTK) has biased composition (basic and acidic residues). Positions 50 to 63 (NVNSNTGMQTTENY) are enriched in polar residues. The span at 67-82 (KGNERNVKFPPEHPVE) shows a compositional bias: basic and acidic residues. Acidic residues predominate over residues 127–139 (GEDDYYTDGEESS). The residue at position 133 (Thr133) is a Phosphothreonine. 2 positions are modified to phosphoserine: Ser138 and Ser139. Low complexity-rich tracts occupy residues 170–185 (SSSSSSSLSSSSSGSG) and 194–205 (DSHLSDSSPSSK). Ser218 is subject to Phosphoserine. Positions 227–239 (IKSTETQPSSTTP) are enriched in polar residues. Phosphoserine is present on Ser248. Residues 253 to 263 (TDVSPLSTPDI) show a composition bias toward polar residues. Residues 320-329 (SSKSSSVLDS) show a composition bias toward low complexity. At Ser330 the chain carries Phosphoserine. Positions 374–450 (GKNYSFTREE…ALLKRLEAVK (77 aa)) form a coiled coil. The segment covering 493–503 (SRTSSATSGLS) has biased composition (polar residues).

It belongs to the CFAP97 family.

The polypeptide is Cilia- and flagella-associated protein 97 (Homo sapiens (Human)).